A 277-amino-acid chain; its full sequence is Diaminopimelate epimerase (277 aa).

Asn13, Gln46, and Asn66 together coordinate substrate. The active-site Proton donor is Cys75. Residues 76–77 (GN), Asn159, Asn192, and 210–211 (ER) each bind substrate. Cys219 (proton acceptor) is an active-site residue. 220–221 (GT) contributes to the substrate binding site.

Belongs to the diaminopimelate epimerase family. In terms of assembly, homodimer.

It localises to the cytoplasm. The enzyme catalyses (2S,6S)-2,6-diaminopimelate = meso-2,6-diaminopimelate. It functions in the pathway amino-acid biosynthesis; L-lysine biosynthesis via DAP pathway; DL-2,6-diaminopimelate from LL-2,6-diaminopimelate: step 1/1. Catalyzes the stereoinversion of LL-2,6-diaminopimelate (L,L-DAP) to meso-diaminopimelate (meso-DAP), a precursor of L-lysine and an essential component of the bacterial peptidoglycan. This Azoarcus sp. (strain BH72) protein is Diaminopimelate epimerase.